The following is a 364-amino-acid chain: Transcription factor SPEECHLESS (364 aa).

The tract at residues 35-109 (GEISPTAAST…QKMSHVTVER (75 aa)) is disordered. S38 bears the Phosphoserine; by ASK7 mark. At T40 the chain carries Phosphothreonine; by ASK7. Polar residues predominate over residues 40–53 (TAASTPKDGTTSSK). S43 carries the phosphoserine; by ASK7 modification. At T44 the chain carries Phosphothreonine; by ASK7. Position 65 is a phosphoserine; by ASK7 (S65). Acidic residues predominate over residues 79-92 (EDEEEEDGDGEAEE). The tract at residues 99-112 (QQKMSHVTVERNRR) is basic motif. A bHLH domain is found at 99 to 150 (QQKMSHVTVERNRRKQMNEHLTVLRSLMPCFYVKRGDQASIIGGVVEYISEL). Positions 113–150 (KQMNEHLTVLRSLMPCFYVKRGDQASIIGGVVEYISEL) are helix-loop-helix motif. A Phosphoserine; by ASK7 modification is found at S171. The tract at residues 171–227 (SPRVVPSPRPSPPVLSPRKPPLSPRINHHQIHHHLLLPPISPRTPQPTSPYRAIPPQ) is disordered. Residues 175-193 (VPSPRPSPPVLSPRKPPLS) are compositionally biased toward pro residues. S177 bears the Phosphoserine; by ASK7, MPK3 and MPK6 mark. A Phosphoserine; by ASK7 modification is found at S181. At S186 the chain carries Phosphoserine; by CDKA-1, ASK7, MPK3 and MPK6. S193 carries the phosphoserine; by MPK3 and MPK6 modification. A compositionally biased stretch (basic residues) spans 196-205 (INHHQIHHHL). Pro residues predominate over residues 209 to 218 (PISPRTPQPT). S211 is subject to Phosphoserine; by MPK3 and MPK6. The residue at position 214 (T214) is a Phosphothreonine; by ASK7, MPK3 and MPK6. At S219 the chain carries Phosphoserine; by ASK7, MPK3 and MPK6.

In terms of assembly, homodimer. Forms dimers with SCRM and SCRM2. May interact with CDKA-1. Post-translationally, phosphorylated by ASK7/BIN2 and ASK3/SK12; this post-translational modification inhibits activity and limit epidermal cell proliferation. Phosphorylation by MPK3 and MPK6 leads to the inhibition of stomatal fate and to degradation. Stabilized by CDKA-1-mediated phosphorylation at Ser-186 which promotes stomatal development. Expressed in developing leaf epidermis. Reduced accumulation in the stomatal lineage ground cells (SLGCs) where BASL is polarized in the cell cortex. Observed in small cells of non-protruding hypocotyl cell files and of developing cotyledon epidermis. Restricted to meristemoids (stomatal precursor cell) in leaves epidermis, mostly in dividing cells of non-protruding cell files.

It is found in the nucleus. With respect to regulation, negatively regulated through phosphorylation by the MAPK module. Activity is constrained by polarized BASL in stomatal lineage ground cells (SLGCs) undergoing ACD. Transcription factor acting as an integration node for stomata and brassinosteroid (BR) signaling pathways to control stomatal initiation and development. Activates transcription when in the presence of SCRM/ICE1. Functions as a dimer with SCRM or SCRM2 during stomatal initiation. Required for the initiation, the spacing and the formation of stomata, by promoting the first asymmetric cell divisions. Together with FMA and MUTE, modulates the stomata formation. Involved in the regulation of growth reduction under osmotic stress (e.g. mannitol), associated with a quick decrease of meristemoid mother cells (MMCs) number lower stomatal index and density. This Arabidopsis thaliana (Mouse-ear cress) protein is Transcription factor SPEECHLESS.